We begin with the raw amino-acid sequence, 84 residues long: uncharacterized protein (84 aa).

To M.jannaschii MJ1121.

This is an uncharacterized protein from Archaeoglobus fulgidus (strain ATCC 49558 / DSM 4304 / JCM 9628 / NBRC 100126 / VC-16).